A 792-amino-acid chain; its full sequence is Lon protease (792 aa).

Positions 16–208 constitute a Lon N-terminal domain; sequence LPILPLRETV…KVTYYLTREL (193 aa). ATP is bound at residue 360–367; it reads GPPGVGKT. Positions 597–778 constitute a Lon proteolytic domain; that stretch reads KDEVGVATGL…DEVLNLALLE (182 aa). Active-site residues include Ser-684 and Lys-727.

The protein belongs to the peptidase S16 family. In terms of assembly, homohexamer. Organized in a ring with a central cavity.

The protein localises to the cytoplasm. The enzyme catalyses Hydrolysis of proteins in presence of ATP.. ATP-dependent serine protease that mediates the selective degradation of mutant and abnormal proteins as well as certain short-lived regulatory proteins. Required for cellular homeostasis and for survival from DNA damage and developmental changes induced by stress. Degrades polypeptides processively to yield small peptide fragments that are 5 to 10 amino acids long. Binds to DNA in a double-stranded, site-specific manner. In Dictyoglomus thermophilum (strain ATCC 35947 / DSM 3960 / H-6-12), this protein is Lon protease.